Here is a 296-residue protein sequence, read N- to C-terminus: Probable endonuclease 4 (296 aa).

The Zn(2+) site is built by H68, H109, E144, D178, H181, H213, D226, H228, and E258.

This sequence belongs to the AP endonuclease 2 family. Zn(2+) is required as a cofactor.

The enzyme catalyses Endonucleolytic cleavage to 5'-phosphooligonucleotide end-products.. Its function is as follows. Endonuclease IV plays a role in DNA repair. It cleaves phosphodiester bonds at apurinic or apyrimidinic (AP) sites, generating a 3'-hydroxyl group and a 5'-terminal sugar phosphate. The protein is Probable endonuclease 4 of Staphylococcus epidermidis (strain ATCC 35984 / DSM 28319 / BCRC 17069 / CCUG 31568 / BM 3577 / RP62A).